Here is a 644-residue protein sequence, read N- to C-terminus: Cell pattern formation-associated protein StuA (644 aa).

A compositionally biased stretch (low complexity) spans 18-33; that stretch reads ATAHAPASAAPSGISH. 2 disordered regions span residues 18–58 and 86–120; these read ATAH…PGYP and QLPA…APPG. Positions 38 to 47 are enriched in polar residues; sequence PQSSMMQPGQ. The segment covering 87–104 has biased composition (low complexity); it reads LPAMSSSGPSPSLSGAQS. An HTH APSES-type domain is found at 124–230; that stretch reads RVTATLWEDE…HDIGALLYHP (107 aa). The H-T-H motif DNA-binding region spans 158–179; it reads GTKLLNVAGMTRGRRDGILKSE. Residues 239 to 644 form a disordered region; it reads GSAAMAAVDR…HTMTAQRARR (406 aa). The span at 253-269 shows a compositional bias: polar residues; sequence SMQTQRYISGPTTSQPP. The segment covering 315-328 has biased composition (low complexity); that stretch reads SASSIMGMSNSGSS. 3 stretches are compositionally biased toward polar residues: residues 334 to 357, 371 to 383, and 395 to 404; these read ANVQ…TRSV, QAIS…SYDN, and PGQYNTQGQS. Residues 456-465 are compositionally biased toward basic and acidic residues; it reads EGDHEHDNEY. Positions 509–524 are enriched in low complexity; it reads GSGRATPRTTTTSQTQ. A compositionally biased stretch (polar residues) spans 525–544; the sequence is WNSGYPTPQRQGPPSSNLYN. Residues 584 to 612 are nuclear localization domain; that stretch reads KRGRDDDDEDPYRPDSVQSDDMGGLKRRK. Positions 635 to 644 are enriched in polar residues; the sequence is HTMTAQRARR.

The protein belongs to the EFG1/PHD1/stuA family.

Its subcellular location is the nucleus. Its function is as follows. Transcription factor that regulates asexual reproduction. Binds the StuA-response elements (StRE) with the consensus sequence 5'-(A/T)CGCG(T/A)N(A/C)-3' at the promoters of target genes. Required for pathogenicity and positively regulates the synthesis of the mycotoxin alternariol. Acts as a positive regulator of Tox3 but is not required for the expression of ToxA. Also acts as a central regulator of carbon metabolism including glycolysis, the TCA cycle, and amino acid synthesis. The protein is Cell pattern formation-associated protein StuA of Phaeosphaeria nodorum (strain SN15 / ATCC MYA-4574 / FGSC 10173) (Glume blotch fungus).